The following is a 583-amino-acid chain: Immunity-related GTPase family Q protein (583 aa).

Cys-152 and Cys-158 are oxidised to a cystine. Residues 155–179 adopt a coiled-coil conformation; that stretch reads SDRCEELERLQVVLRTQAEALQRLL. The short motif at 186–189 is the LIR 1 element; it reads FEVL. A Phosphothreonine modification is found at Thr-203. Positions 223 to 409 constitute an IRG-type G domain; that stretch reads ARLDLAVAGT…PGLGTWLQHA (187 aa). The tract at residues 322-373 is disordered; sequence APLVGVRTDGQGEDPPEVLEEEKAQNASDGNSGDARSEGKKAGIGDSGCTAA. The segment covering 332 to 341 has biased composition (acidic residues); it reads QGEDPPEVLE. Positions 381–384 match the LIR 2 motif; the sequence is WEVL.

This sequence belongs to the TRAFAC class dynamin-like GTPase superfamily. IRG family. As to quaternary structure, interacts (via LIR motif 1) with GABARAPL2. Interacts (via LIR motif 2) with MAP1LC3B/LC3B.

The protein localises to the lysosome. It localises to the cytoplasmic vesicle. It is found in the autophagosome. In terms of biological role, autophagy receptor that specifically promotes clearance of misfolded MHC class I molecules by targeting them to the lysosome for degradation. Acts as a molecular adapter that specifically recognizes and binds (1) misfolded MHC class I molecules following their ubiquitination, as well as (2) autophagy-related proteins, promoting the recruitment of misfolded MHC class I molecules to autophagy machinery for degradation. Degradation of misfolded MHC class I molecules is essential to prevent accumulation of defective MHC class I complexes at the surface of CD8(+) T-cells and prevent a stronger T-cell-mediated response. In contrast to other members of the family, does not show GTPase activity. In Mus musculus (Mouse), this protein is Immunity-related GTPase family Q protein (Irgq).